The sequence spans 341 residues: Phosphoribosylformylglycinamidine cyclo-ligase (341 aa).

This sequence belongs to the AIR synthase family.

It is found in the cytoplasm. It catalyses the reaction 2-formamido-N(1)-(5-O-phospho-beta-D-ribosyl)acetamidine + ATP = 5-amino-1-(5-phospho-beta-D-ribosyl)imidazole + ADP + phosphate + H(+). It functions in the pathway purine metabolism; IMP biosynthesis via de novo pathway; 5-amino-1-(5-phospho-D-ribosyl)imidazole from N(2)-formyl-N(1)-(5-phospho-D-ribosyl)glycinamide: step 2/2. This Picosynechococcus sp. (strain ATCC 27264 / PCC 7002 / PR-6) (Agmenellum quadruplicatum) protein is Phosphoribosylformylglycinamidine cyclo-ligase.